The chain runs to 150 residues: Small ribosomal subunit protein eS19 (150 aa).

This sequence belongs to the eukaryotic ribosomal protein eS19 family. In terms of assembly, part of the 30S ribosomal subunit.

May be involved in maturation of the 30S ribosomal subunit. The protein is Small ribosomal subunit protein eS19 of Thermoplasma acidophilum (strain ATCC 25905 / DSM 1728 / JCM 9062 / NBRC 15155 / AMRC-C165).